The sequence spans 288 residues: MTAIILDGRALAKTLREELRADTQAFIQNNGIAPSLAVVKIAGDPASDRYTRTIRKGCEEIGITFTDHTLPPETTQAMLEETISALSFDRTIHGILLHLPLPPGLDSARAIAQIDPAKDVDGVHPYNAGLLAMGRPGLIPNTPAGGMELLLRNNIPLKGQHATVVGRSVVVGKPMALLLLNEHATVTIAHSRTKDLAAVVRSADIVVAATGKPGLITGDMVKPGAVVVDFGVNVLEDGRVVGDVDFDSVVNVASAITPVPGGTGPVTNVMLLRNVLRAAQQQLASRHH.

Residues 166–168 (GRS), Ser191, and Val232 each bind NADP(+).

Belongs to the tetrahydrofolate dehydrogenase/cyclohydrolase family. As to quaternary structure, homodimer.

It catalyses the reaction (6R)-5,10-methylene-5,6,7,8-tetrahydrofolate + NADP(+) = (6R)-5,10-methenyltetrahydrofolate + NADPH. The catalysed reaction is (6R)-5,10-methenyltetrahydrofolate + H2O = (6R)-10-formyltetrahydrofolate + H(+). Its pathway is one-carbon metabolism; tetrahydrofolate interconversion. In terms of biological role, catalyzes the oxidation of 5,10-methylenetetrahydrofolate to 5,10-methenyltetrahydrofolate and then the hydrolysis of 5,10-methenyltetrahydrofolate to 10-formyltetrahydrofolate. This Roseiflexus sp. (strain RS-1) protein is Bifunctional protein FolD.